The primary structure comprises 676 residues: UvrABC system protein B (676 aa).

Residues 26–414 form the Helicase ATP-binding domain; sequence EGLDAGLAHQ…SAGEIADQVV (389 aa). 39–46 lines the ATP pocket; sequence GVTGSGKT. Positions 92–115 match the Beta-hairpin motif; sequence YYDYYQPEAYVPTTDTFIEKDSSV. The Helicase C-terminal domain maps to 432-598; it reads QVDDLLSEIR…ALKRNIKDIM (167 aa). Residues 636–671 enclose the UVR domain; sequence EKEITKLEAQMYKHAQDLEFELAAQKRDEIEKLRQQ.

This sequence belongs to the UvrB family. In terms of assembly, forms a heterotetramer with UvrA during the search for lesions. Interacts with UvrC in an incision complex.

It is found in the cytoplasm. The UvrABC repair system catalyzes the recognition and processing of DNA lesions. A damage recognition complex composed of 2 UvrA and 2 UvrB subunits scans DNA for abnormalities. Upon binding of the UvrA(2)B(2) complex to a putative damaged site, the DNA wraps around one UvrB monomer. DNA wrap is dependent on ATP binding by UvrB and probably causes local melting of the DNA helix, facilitating insertion of UvrB beta-hairpin between the DNA strands. Then UvrB probes one DNA strand for the presence of a lesion. If a lesion is found the UvrA subunits dissociate and the UvrB-DNA preincision complex is formed. This complex is subsequently bound by UvrC and the second UvrB is released. If no lesion is found, the DNA wraps around the other UvrB subunit that will check the other stand for damage. This Vibrio vulnificus (strain CMCP6) protein is UvrABC system protein B.